The chain runs to 246 residues: MTIPLLSYAPSSQNQRVAGYEVPNEETPWRYSLEDAVDQSDIDELIWAAYRQVFSEHVVLKSTRQPHLESQLANRAISVRDFIRGLAKSETFRRLVVETNSNYRLVEIALKRLLGRAPYNKQEELAWSIRIATDGWQKFVDTLVDSDEYTQNFGDNTVPYQRRRYKDRPFNLVTPRYSDYWRDKLENSRYKWGDIRNFLEMARSVKVTPVQFKPVSTANVQIPDTTRRDRPTVPASINPTASFPLR.

One can recognise a PBS-linker domain in the interval serine 11–arginine 189. Residues aspartate 224–arginine 246 are disordered. A compositionally biased stretch (polar residues) spans alanine 235–arginine 246.

Belongs to the phycobilisome linker protein family. The phycobilisome is a hemidiscoidal structure that is composed of two distinct substructures: a core complex and a number of rods radiating from the core.

The protein resides in the cellular thylakoid membrane. Its function is as follows. Rod-core linker protein required for attachment of phycocyanin to allophycocyanin in cores of phycobilisomes. Functionally, linker polypeptides determine the state of aggregation and the location of the disk-shaped phycobiliprotein units within the phycobilisome and modulate their spectroscopic properties in order to mediate a directed and optimal energy transfer. The chain is Phycobilisome rod-core linker polypeptide CpcG2 (cpcG2) from Thermosynechococcus vestitus (strain NIES-2133 / IAM M-273 / BP-1).